A 130-amino-acid polypeptide reads, in one-letter code: Histidine triad nucleotide-binding protein 1 (130 aa).

In terms of domain architecture, HIT spans L22–G130. The Histidine triad motif motif lies at H114–H118.

The sequence is that of Histidine triad nucleotide-binding protein 1 (hint-1) from Caenorhabditis elegans.